The chain runs to 257 residues: Probable amino-acid ABC transporter-binding protein HI_1080 (257 aa).

Residues 1-23 form the signal peptide; that stretch reads MKKLLFTTALLTGAIAFSTFSHA.

It belongs to the bacterial solute-binding protein 3 family.

It localises to the periplasm. Its function is as follows. Probably part of a binding-protein-dependent transport system for an amino acid. This Haemophilus influenzae (strain ATCC 51907 / DSM 11121 / KW20 / Rd) protein is Probable amino-acid ABC transporter-binding protein HI_1080.